The following is a 460-amino-acid chain: MLHLAGTLQITHGLRDLALKHGPLMHLQLGEISAVVVSSARVAKEVLKTHDIAFADRPKLVSTKILLRNEKDLVMSIYGDYWRQMRKLCTVELLNTNKVSFFRSIREEEVWRLVQSIQSSLESPINLSKRFSAFTNAVTCIATIGKRSQLQDELVQVIEDIASLAGGFDVSDLFPSIKLLHVLSGMRPKLQTIRKKLDNIFDNIILEHKENRNRTNKGYGLTGEEDLVDVLLSVQERGGFEFPVTTDDIYGLILNMLIGGTDTSATALEWTMSELIRNPRVLEKVQAEVRQALKGKTTIHENDIQGLSYLKLVIKETLRLHPPLALLLPRLCRDERQIDGYQIPIDTKLIINAWAIGRDPGYWVDAESFEPERFDNISADFNGVNLNYIPFGSGRRMCPGISFGVATVELPLALLLYHFNWKLPFGMKPESLDMSETFGATLKRKNNLCLIATSCIPSNN.

Position 398 (Cys-398) interacts with heme.

Belongs to the cytochrome P450 family. The cofactor is heme.

Its function is as follows. Probable heme-thiolate monooxygenase. This chain is Cytochrome P450 CYP71D312, found in Panax ginseng (Korean ginseng).